The following is a 557-amino-acid chain: GMP synthase [glutamine-hydrolyzing] (557 aa).

A Glutamine amidotransferase type-1 domain is found at 13 to 209 (TILTLDFGSQ…AVDICGANPN (197 aa)). Catalysis depends on Cys-89, which acts as the Nucleophile. Catalysis depends on residues His-183 and Glu-185. In terms of domain architecture, GMPS ATP-PPase spans 210–414 (WTMSKFVDQE…LGIAHELVMR (205 aa)). 238-244 (SGGVDST) lines the ATP pocket. Residues Arg-311, Asp-476, Lys-549, and Glu-555 each coordinate XMP.

Homodimer. Mg(2+) is required as a cofactor.

The protein resides in the cytoplasm. It is found in the cytosol. It carries out the reaction XMP + L-glutamine + ATP + H2O = GMP + L-glutamate + AMP + diphosphate + 2 H(+). It participates in purine metabolism; GMP biosynthesis; GMP from XMP (L-Gln route): step 1/1. With respect to regulation, inhibited by 6-diazo-5-oxo-l-norleucine (DON) and acivicin (ACI). Functionally, catalyzes the conversion of xanthine monophosphate (XMP) to GMP in the presence of glutamine and ATP through an adenyl-XMP intermediate. The sequence is that of GMP synthase [glutamine-hydrolyzing] (gua1) from Aspergillus fumigatus (strain ATCC MYA-4609 / CBS 101355 / FGSC A1100 / Af293) (Neosartorya fumigata).